Consider the following 285-residue polypeptide: Probable endonuclease 4 (285 aa).

Residues histidine 69, histidine 109, glutamate 145, aspartate 179, histidine 182, histidine 216, aspartate 229, histidine 231, and glutamate 261 each contribute to the Zn(2+) site.

The protein belongs to the AP endonuclease 2 family. Requires Zn(2+) as cofactor.

The enzyme catalyses Endonucleolytic cleavage to 5'-phosphooligonucleotide end-products.. In terms of biological role, endonuclease IV plays a role in DNA repair. It cleaves phosphodiester bonds at apurinic or apyrimidinic (AP) sites, generating a 3'-hydroxyl group and a 5'-terminal sugar phosphate. The chain is Probable endonuclease 4 from Salmonella paratyphi C (strain RKS4594).